The primary structure comprises 114 residues: Amphinase-2 (114 aa).

Histidine 15 functions as the Proton acceptor in the catalytic mechanism. Cystine bridges form between cysteine 26–cysteine 79, cysteine 41–cysteine 85, cysteine 59–cysteine 100, and cysteine 97–cysteine 114. Asparagine 27 carries N-linked (GlcNAc...) asparagine glycosylation. Position 42–46 (42–46 (KPINT)) interacts with substrate. Residues asparagine 67 and asparagine 91 are each glycosylated (N-linked (GlcNAc...) asparagine). Histidine 107 (proton donor) is an active-site residue.

The protein belongs to the pancreatic ribonuclease family. In terms of assembly, monomer. There are at least four different forms arising from glycan heterogeneity.

Its subcellular location is the secreted. Functionally, endonuclease, hydrolyzes highly polymerized RNA, poly(U) and poly(C), and the dinucleotides CpA and UpA. Hydrolyzes 18S and 28S ribosomal RNA. More active towards rCA than rUA or rUG. Has cytotoxic activity against cultured human submaxillary gland carcinoma cells. The chain is Amphinase-2 from Lithobates pipiens (Northern leopard frog).